We begin with the raw amino-acid sequence, 189 residues long: uncharacterized protein (189 aa).

The HTH tetR-type domain occupies 9 to 69; sequence ADTGGRILRA…SMLTSHIADV (61 aa). Residues 32–51 constitute a DNA-binding region (H-T-H motif); sequence TLAEIARRAGVSRPTVYRRW.

This is an uncharacterized protein from Mycobacterium tuberculosis (strain CDC 1551 / Oshkosh).